Here is a 313-residue protein sequence, read N- to C-terminus: Homeobox protein knotted-1-like 2 (313 aa).

Residues aspartate 13–glutamate 40 form a disordered region. A compositionally biased stretch (low complexity) spans proline 14–serine 27. A compositionally biased stretch (gly residues) spans proline 28–glycine 38. The 21-residue stretch at glutamate 205–isoleucine 225 folds into the ELK domain. The homeobox; TALE-type DNA-binding region spans leucine 226–asparagine 289. A disordered region spans residues arginine 282–tryptophan 313.

Belongs to the TALE/KNOX homeobox family. In terms of tissue distribution, isoform 1 is expressed in roots, leaf blades, leaf sheaths and flowers. Isoform 2 is expressed in leaf blades, leaf sheaths and flowers.

Its subcellular location is the nucleus. This is Homeobox protein knotted-1-like 2 (HOS58) from Oryza sativa subsp. japonica (Rice).